The following is an 85-amino-acid chain: MAPPLSPGSRVLIALIRVYQRLISPLLGPHCRFTPTCSSYGIEALRRFGVIKGSWLTVKRVLKCHPLHPGGDDPVPPGPFNTREH.

This sequence belongs to the UPF0161 family.

The protein resides in the cell inner membrane. In terms of biological role, could be involved in insertion of integral membrane proteins into the membrane. The polypeptide is Putative membrane protein insertion efficiency factor (Escherichia coli O157:H7).